The sequence spans 355 residues: Holliday junction branch migration complex subunit RuvB (355 aa).

Residues 4-190 form a large ATPase domain (RuvB-L) region; it reads TDKLAAERII…FGIVARLEFY (187 aa). Residues Leu-29, Arg-30, Gly-71, Lys-74, Thr-75, Thr-76, 137–139, Arg-180, Tyr-190, and Arg-227 contribute to the ATP site; that span reads EDY. Residue Thr-75 coordinates Mg(2+). The segment at 191–261 is small ATPAse domain (RuvB-S); that stretch reads NAEQLARIVT…VADAALKMLD (71 aa). The tract at residues 264-355 is head domain (RuvB-H); it reads AVGFDLMDRK…LPGLWDSAAT (92 aa). Positions 300, 319, and 324 each coordinate DNA.

This sequence belongs to the RuvB family. In terms of assembly, homohexamer. Forms an RuvA(8)-RuvB(12)-Holliday junction (HJ) complex. HJ DNA is sandwiched between 2 RuvA tetramers; dsDNA enters through RuvA and exits via RuvB. An RuvB hexamer assembles on each DNA strand where it exits the tetramer. Each RuvB hexamer is contacted by two RuvA subunits (via domain III) on 2 adjacent RuvB subunits; this complex drives branch migration. In the full resolvosome a probable DNA-RuvA(4)-RuvB(12)-RuvC(2) complex forms which resolves the HJ.

Its subcellular location is the cytoplasm. It carries out the reaction ATP + H2O = ADP + phosphate + H(+). Functionally, the RuvA-RuvB-RuvC complex processes Holliday junction (HJ) DNA during genetic recombination and DNA repair, while the RuvA-RuvB complex plays an important role in the rescue of blocked DNA replication forks via replication fork reversal (RFR). RuvA specifically binds to HJ cruciform DNA, conferring on it an open structure. The RuvB hexamer acts as an ATP-dependent pump, pulling dsDNA into and through the RuvAB complex. RuvB forms 2 homohexamers on either side of HJ DNA bound by 1 or 2 RuvA tetramers; 4 subunits per hexamer contact DNA at a time. Coordinated motions by a converter formed by DNA-disengaged RuvB subunits stimulates ATP hydrolysis and nucleotide exchange. Immobilization of the converter enables RuvB to convert the ATP-contained energy into a lever motion, pulling 2 nucleotides of DNA out of the RuvA tetramer per ATP hydrolyzed, thus driving DNA branch migration. The RuvB motors rotate together with the DNA substrate, which together with the progressing nucleotide cycle form the mechanistic basis for DNA recombination by continuous HJ branch migration. Branch migration allows RuvC to scan DNA until it finds its consensus sequence, where it cleaves and resolves cruciform DNA. This is Holliday junction branch migration complex subunit RuvB from Paraburkholderia xenovorans (strain LB400).